Reading from the N-terminus, the 604-residue chain is Proline--tRNA ligase (604 aa).

Belongs to the class-II aminoacyl-tRNA synthetase family. ProS type 1 subfamily. Homodimer.

The protein resides in the cytoplasm. It catalyses the reaction tRNA(Pro) + L-proline + ATP = L-prolyl-tRNA(Pro) + AMP + diphosphate. Its function is as follows. Catalyzes the attachment of proline to tRNA(Pro) in a two-step reaction: proline is first activated by ATP to form Pro-AMP and then transferred to the acceptor end of tRNA(Pro). As ProRS can inadvertently accommodate and process non-cognate amino acids such as alanine and cysteine, to avoid such errors it has two additional distinct editing activities against alanine. One activity is designated as 'pretransfer' editing and involves the tRNA(Pro)-independent hydrolysis of activated Ala-AMP. The other activity is designated 'posttransfer' editing and involves deacylation of mischarged Ala-tRNA(Pro). The misacylated Cys-tRNA(Pro) is not edited by ProRS. The sequence is that of Proline--tRNA ligase from Trichormus variabilis (strain ATCC 29413 / PCC 7937) (Anabaena variabilis).